The chain runs to 154 residues: MAKQEQNIVYLYCDGACRGNPGPGGWGVLLRYNQHERQLHGGVANTTNNQMELTAAIEGLKSLKKPCQVVVTTDSQYLRRGITEWLPVWKRRGWRTSNKKPVKNQPLWETLEREVERHTIVWHWVKGHSGHAENEIADELANRGIDEVLKRGAQ.

The RNase H type-1 domain occupies 5-146 (EQNIVYLYCD…ADELANRGID (142 aa)). Asp-14, Glu-52, Asp-74, and Asp-138 together coordinate Mg(2+).

It belongs to the RNase H family. Monomer. It depends on Mg(2+) as a cofactor.

It is found in the cytoplasm. The catalysed reaction is Endonucleolytic cleavage to 5'-phosphomonoester.. Its function is as follows. Endonuclease that specifically degrades the RNA of RNA-DNA hybrids. In Coxiella burnetii (strain CbuG_Q212) (Coxiella burnetii (strain Q212)), this protein is Ribonuclease H.